Reading from the N-terminus, the 1116-residue chain is Error-prone DNA polymerase (1116 aa).

It belongs to the DNA polymerase type-C family. DnaE2 subfamily.

The protein localises to the cytoplasm. The catalysed reaction is DNA(n) + a 2'-deoxyribonucleoside 5'-triphosphate = DNA(n+1) + diphosphate. In terms of biological role, DNA polymerase involved in damage-induced mutagenesis and translesion synthesis (TLS). It is not the major replicative DNA polymerase. This is Error-prone DNA polymerase from Sinorhizobium medicae (strain WSM419) (Ensifer medicae).